The chain runs to 861 residues: Leucine--tRNA ligase (861 aa).

The 'HIGH' region signature appears at 42 to 52 (PYPSGRIHMGH). A 'KMSKS' region motif is present at residues 623 to 627 (KMSKS). Lys-626 lines the ATP pocket.

Belongs to the class-I aminoacyl-tRNA synthetase family.

The protein localises to the cytoplasm. It carries out the reaction tRNA(Leu) + L-leucine + ATP = L-leucyl-tRNA(Leu) + AMP + diphosphate. The protein is Leucine--tRNA ligase of Caulobacter sp. (strain K31).